A 145-amino-acid polypeptide reads, in one-letter code: Ribonuclease VapC24 (145 aa).

The PINc domain maps to 4–123; that stretch reads IDTNILLYAQ…RHHGVDEFAT (120 aa). Positions 5 and 106 each coordinate Mg(2+).

This sequence belongs to the PINc/VapC protein family. It depends on Mg(2+) as a cofactor.

Functionally, toxic component of a type II toxin-antitoxin (TA) system. An RNase. Its cognate antitoxin is VapB24. The chain is Ribonuclease VapC24 from Mycobacterium tuberculosis (strain CDC 1551 / Oshkosh).